Here is a 219-residue protein sequence, read N- to C-terminus: MKVKEFMNNKKGATGVGTLIVFIAMVLVAAVAASVLINTSGFLQQKASSTGTESTEQVSTGLKMFQTSGKLNEPIIDRLTIYVTPSPGSKPVDLKNTKLLMNRWTFQPPPVSYSSTYFENNNKQIFDVTGSKAWNNGAILPEYNFGVIVIQDDDGSCTAESPVIGKGDMAVITINCTNLDLAPRTRLNGYLQSEIGFKTQFTYILPNAYDKTEDVVILQ.

Residues 1 to 12 (MKVKEFMNNKKG) constitute a propeptide that is removed on maturation. N-linked (GlcNAc...) asparagine glycosylation is found at asparagine 38 and asparagine 175.

The protein belongs to the archaeal flagellin family. Post-translationally, N-linked glycans consist of the 779 Da trisaccharide beta-ManNAc(Thr)-(1-4)-beta-GlcNAc3NAcA-(1-3)-beta-GlcNAc.

The protein resides in the archaeal flagellum. Flagellin is the subunit protein which polymerizes to form the filaments of archaeal flagella. The sequence is that of Flagellin A (flaA) from Methanococcus voltae.